A 332-amino-acid polypeptide reads, in one-letter code: MAVIYYDKDCDLSLIEKKLIGIVGYGAQGHAHAQNLRDSGLKVIVACVEGGRGWKKATADGFEVMCVAEMAKKADIIMMLAPDTSQAKIYKDSIEQGLKPGKMLMFAHGFNIHYGQIVPPSFVDVTMIAPKCPGYMLRQVFTEGAGAPSLIAVEQDASGKAKELALAYAKGIGSNRAGILETTFAEETETDLFGEQAVLCGGTTSLVKAGFETLVEAGYQPEVAYFECLHELKLIVDLMYQGGIAYMRDSISDTAKYGDFTRGPRVINEDTYETMGEILGEIQDGSFAKEWILENQAGRPVYNSLRRMESEHLIEEVGAELRSMMSWLKKKR.

The KARI N-terminal Rossmann domain maps to 1–182 (MAVIYYDKDC…GSNRAGILET (182 aa)). Residues 25-28 (YGAQ) and 83-86 (DTSQ) each bind NADP(+). Residue His-108 is part of the active site. Gly-134 serves as a coordination point for NADP(+). A KARI C-terminal knotted domain is found at 183 to 328 (TFAEETETDL…AELRSMMSWL (146 aa)). Residues Asp-191, Glu-195, Glu-227, and Glu-231 each contribute to the Mg(2+) site. A substrate-binding site is contributed by Ser-252.

The protein belongs to the ketol-acid reductoisomerase family. Requires Mg(2+) as cofactor.

The enzyme catalyses (2R)-2,3-dihydroxy-3-methylbutanoate + NADP(+) = (2S)-2-acetolactate + NADPH + H(+). The catalysed reaction is (2R,3R)-2,3-dihydroxy-3-methylpentanoate + NADP(+) = (S)-2-ethyl-2-hydroxy-3-oxobutanoate + NADPH + H(+). The protein operates within amino-acid biosynthesis; L-isoleucine biosynthesis; L-isoleucine from 2-oxobutanoate: step 2/4. Its pathway is amino-acid biosynthesis; L-valine biosynthesis; L-valine from pyruvate: step 2/4. Its function is as follows. Involved in the biosynthesis of branched-chain amino acids (BCAA). Catalyzes an alkyl-migration followed by a ketol-acid reduction of (S)-2-acetolactate (S2AL) to yield (R)-2,3-dihydroxy-isovalerate. In the isomerase reaction, S2AL is rearranged via a Mg-dependent methyl migration to produce 3-hydroxy-3-methyl-2-ketobutyrate (HMKB). In the reductase reaction, this 2-ketoacid undergoes a metal-dependent reduction by NADPH to yield (R)-2,3-dihydroxy-isovalerate. This chain is Ketol-acid reductoisomerase (NADP(+)), found in Dehalococcoides mccartyi (strain CBDB1).